Here is a 405-residue protein sequence, read N- to C-terminus: Prostaglandin E2 receptor EP1 subtype (405 aa).

The Extracellular segment spans residues 1–39; it reads MSPYGLNLSLVDEATTCVTPRVPNTSVVLPTGGNGTSPA. Residues asparagine 7, asparagine 24, and asparagine 34 are each glycosylated (N-linked (GlcNAc...) asparagine). The helical transmembrane segment at 40–62 threads the bilayer; sequence LPIFSMTLGAVSNVLALALLAQV. Over 63–80 the chain is Cytoplasmic; that stretch reads AGRLRRRRSTATFLLFVA. The helical transmembrane segment at 81–99 threads the bilayer; the sequence is SLLAIDLAGHVIPGALVLR. Residues 100–113 are Extracellular-facing; the sequence is LYTAGRAPAGGACH. The cysteines at positions 112 and 190 are disulfide-linked. Residues 114-135 form a helical membrane-spanning segment; it reads FLGGCMVFFGLCPLLLGCGMAV. The Cytoplasmic portion of the chain corresponds to 136–157; that stretch reads ERCVGVTQPLIHAARVSVARAR. Residues 158 to 179 form a helical membrane-spanning segment; sequence LALALLAAMALAVALLPLVHVG. Over 180 to 202 the chain is Extracellular; the sequence is HYELQYPGTWCFISLGPPGGWRQ. The helical transmembrane segment at 203–228 threads the bilayer; sequence ALLAGLFAGLGLAALLAALVCNTLSG. Residues 229-301 are Cytoplasmic-facing; the sequence is LALLRARWRR…HAHDVEMVGQ (73 aa). A helical membrane pass occupies residues 302–323; that stretch reads LVGIMVVSCICWSPLLVLVVLA. Topologically, residues 324–337 are extracellular; that stretch reads IGGWNSNSLQRPLF. Residues 338-357 form a helical membrane-spanning segment; sequence LAVRLASWNQILDPWVYILL. Topologically, residues 358–405 are cytoplasmic; it reads RQAMLRQLLRLLPLRVSAKGGPTELSLTKSAWEASSLRSSRHSGFSHL.

The protein belongs to the G-protein coupled receptor 1 family. In terms of processing, phosphorylated. In terms of tissue distribution, highly abundant in kidney and lung. Found in a lesser extent in spleen, colon, and thymus. Also expressed in uterine myometrium and endometrium.

Its subcellular location is the cell membrane. Its function is as follows. Receptor for prostaglandin E2 (PGE2). The activity of this receptor is mediated by G(q) proteins which activate a phosphatidylinositol-calcium second messenger system. May play a role as an important modulator of renal function. Implicated the smooth muscle contractile response to PGE2 in various tissues. Isoform 1 and isoform 2 have identical ligand binding properties, but isoform 2 lacks coupling to calcium mobilization and may therefore attenuate the action of PGE2 on tissues. This chain is Prostaglandin E2 receptor EP1 subtype (Ptger1), found in Rattus norvegicus (Rat).